The primary structure comprises 430 residues: Adenylosuccinate synthetase (430 aa).

Residues 12 to 18 (GDEGKGK) and 40 to 42 (GHT) contribute to the GTP site. Asp13 (proton acceptor) is an active-site residue. The Mg(2+) site is built by Asp13 and Gly40. IMP-binding positions include 13–16 (DEGK), 38–41 (NAGH), Thr128, Arg142, Gln223, Thr238, and Arg302. His41 acts as the Proton donor in catalysis. Position 298–304 (298–304 (TTTGRPR)) interacts with substrate. Residues Arg304, 330–332 (SID), and 412–414 (SVG) each bind GTP.

This sequence belongs to the adenylosuccinate synthetase family. Homodimer. The cofactor is Mg(2+).

The protein resides in the cytoplasm. The catalysed reaction is IMP + L-aspartate + GTP = N(6)-(1,2-dicarboxyethyl)-AMP + GDP + phosphate + 2 H(+). Its pathway is purine metabolism; AMP biosynthesis via de novo pathway; AMP from IMP: step 1/2. Functionally, plays an important role in the de novo pathway of purine nucleotide biosynthesis. Catalyzes the first committed step in the biosynthesis of AMP from IMP. In Streptococcus suis (strain 98HAH33), this protein is Adenylosuccinate synthetase.